A 301-amino-acid polypeptide reads, in one-letter code: Homoserine kinase (301 aa).

ATP is bound at residue 89-99; that stretch reads KPGSGLGSSSA.

Belongs to the GHMP kinase family. Homoserine kinase subfamily.

The protein resides in the cytoplasm. The catalysed reaction is L-homoserine + ATP = O-phospho-L-homoserine + ADP + H(+). It participates in amino-acid biosynthesis; L-threonine biosynthesis; L-threonine from L-aspartate: step 4/5. In terms of biological role, catalyzes the ATP-dependent phosphorylation of L-homoserine to L-homoserine phosphate. The chain is Homoserine kinase from Methanococcus maripaludis (strain C5 / ATCC BAA-1333).